We begin with the raw amino-acid sequence, 552 residues long: MAFQDLLDQVGSLGRFQILQTAFFCICILIAYPHMLLENFTAAVPGHRCWVHILDNDTVSANGTEILSQETLLRISIPLDSNLRPEKCRRFIHPQWQFLDLNGTFPNMSEPDTEPCVDGWVYDRSSFSSTIVTEWDLVCESQSLISVAQSLFMVAQLLGGLIFGHISDRFGRKIIFRCCLLLFAISGTCAAIAPTFPVYCSLRFLGGICLMNIITNAVSTMSEWTGPKSIALMTGIILNSCNIGQILMGGLGFVIQDWRTLQLTMSIPLFILFLFSRSVLESAQWLIITNQLDEALKELRRAAHINGKKDTGETLTIEFVKSTMKQELDEGQTNVSLFDLLRPPKLRVRIFYLSFVRFAATIPFLGLMLNLQHFGSNIFLFQIIFGAVTFIVRCAVLLTMNHVGRRISQMVSSFLVGIPILVNIFLSQEMQTLRVALATLGIGATTAIFTTHTVHHNELVPTVLRSIAIGLNAMFSRLGATLAPLLMILTVYSPDLPWIIYGVSSILAGLVVLLLPETRNQPLPNTIQDVENNRRDSRKTKQEDISMKVTQF.

12 helical membrane passes run 16 to 36, 144 to 164, 178 to 198, 204 to 224, 235 to 255, 267 to 287, 350 to 370, 378 to 398, 407 to 427, 435 to 455, 469 to 489, and 496 to 516; these read FQIL…PHML, LISV…LIFG, CCLL…TFPV, FLGG…MSEW, GIIL…GFVI, IPLF…QWLI, IFYL…LMLN, IFLF…AVLL, ISQM…IFLS, VALA…HTVH, IGLN…LMIL, and LPWI…LLLP. Positions 524–552 are disordered; it reads PNTIQDVENNRRDSRKTKQEDISMKVTQF. The span at 531–546 shows a compositional bias: basic and acidic residues; that stretch reads ENNRRDSRKTKQEDIS.

Belongs to the major facilitator (TC 2.A.1) superfamily. Organic cation transporter (TC 2.A.1.19) family.

The protein resides in the cell membrane. It carries out the reaction estrone 3-sulfate(out) + glutarate(in) = estrone 3-sulfate(in) + glutarate(out). The enzyme catalyses 17beta-estradiol 17-O-(beta-D-glucuronate)(out) + glutarate(in) = 17beta-estradiol 17-O-(beta-D-glucuronate)(in) + glutarate(out). The catalysed reaction is taurocholate(out) + glutarate(in) = taurocholate(in) + glutarate(out). It catalyses the reaction glycocholate(out) + glutarate(in) = glycocholate(in) + glutarate(out). It carries out the reaction dehydroepiandrosterone 3-sulfate(out) + glutarate(in) = dehydroepiandrosterone 3-sulfate(in) + glutarate(out). The enzyme catalyses glutarate(in) + succinate(out) = glutarate(out) + succinate(in). Functionally, renal transmembrane organic anion/dicarboxylate exchanger that participates in the reabsorption of conjugated steroids, as well as bile acids, driven by an outward gradient of dicarboxylates such as glutarate or succinate. Transports taurocholate, estrone 3-sulfate, and estradiol-17-glucuronide (17beta-estradiol 17-O-(beta-D-glucuronate)), but not androstanediol glucuronide (5alpha-androstane-3alpha,17beta-diol 3-O-(beta-D-glucuronate)). In Equus caballus (Horse), this protein is Steroid transmembrane transporter SLC22A24.